Reading from the N-terminus, the 202-residue chain is MVRVKICGITSLEDALMAVEAGADALGFVFHEDSPRHVPPEQATGIIAGLPPFVQTVGLFVNRPIAYVNETAARCRIDLVQLHGDEPPEFCAAVERRVIKAFRVQDITSLDPIKHYRVAAHLLDAYSPKAYGGTGLTFNWDIAAAAKEFGPVILAGGLTPDNIREAVEAVNPYAVDVSGGVESAPGRKDAAKVREFIRRAKA.

It belongs to the TrpF family.

The enzyme catalyses N-(5-phospho-beta-D-ribosyl)anthranilate = 1-(2-carboxyphenylamino)-1-deoxy-D-ribulose 5-phosphate. It functions in the pathway amino-acid biosynthesis; L-tryptophan biosynthesis; L-tryptophan from chorismate: step 3/5. This is N-(5'-phosphoribosyl)anthranilate isomerase from Geobacter metallireducens (strain ATCC 53774 / DSM 7210 / GS-15).